The primary structure comprises 237 residues: tRNA1(Val) (adenine(37)-N6)-methyltransferase (237 aa).

This sequence belongs to the methyltransferase superfamily. tRNA (adenine-N(6)-)-methyltransferase family.

It localises to the cytoplasm. It carries out the reaction adenosine(37) in tRNA1(Val) + S-adenosyl-L-methionine = N(6)-methyladenosine(37) in tRNA1(Val) + S-adenosyl-L-homocysteine + H(+). In terms of biological role, specifically methylates the adenine in position 37 of tRNA(1)(Val) (anticodon cmo5UAC). This chain is tRNA1(Val) (adenine(37)-N6)-methyltransferase, found in Bacteroides fragilis (strain ATCC 25285 / DSM 2151 / CCUG 4856 / JCM 11019 / LMG 10263 / NCTC 9343 / Onslow / VPI 2553 / EN-2).